We begin with the raw amino-acid sequence, 348 residues long: S-adenosylmethionine:tRNA ribosyltransferase-isomerase (348 aa).

It belongs to the QueA family. In terms of assembly, monomer.

It localises to the cytoplasm. The catalysed reaction is 7-aminomethyl-7-carbaguanosine(34) in tRNA + S-adenosyl-L-methionine = epoxyqueuosine(34) in tRNA + adenine + L-methionine + 2 H(+). It participates in tRNA modification; tRNA-queuosine biosynthesis. Functionally, transfers and isomerizes the ribose moiety from AdoMet to the 7-aminomethyl group of 7-deazaguanine (preQ1-tRNA) to give epoxyqueuosine (oQ-tRNA). The protein is S-adenosylmethionine:tRNA ribosyltransferase-isomerase of Cytophaga hutchinsonii (strain ATCC 33406 / DSM 1761 / CIP 103989 / NBRC 15051 / NCIMB 9469 / D465).